We begin with the raw amino-acid sequence, 245 residues long: Small ribosomal subunit protein uS2 (245 aa).

This sequence belongs to the universal ribosomal protein uS2 family.

The sequence is that of Small ribosomal subunit protein uS2 from Pseudomonas fluorescens (strain SBW25).